The sequence spans 309 residues: tRNA pseudouridine synthase B (309 aa).

The Nucleophile role is filled by Asp-39. The 78-residue stretch at 229-306 folds into the PUA domain; the sequence is LPRVVVHQES…ERVLTLRKVF (78 aa).

Belongs to the pseudouridine synthase TruB family. Type 1 subfamily.

The enzyme catalyses uridine(55) in tRNA = pseudouridine(55) in tRNA. In terms of biological role, responsible for synthesis of pseudouridine from uracil-55 in the psi GC loop of transfer RNAs. The protein is tRNA pseudouridine synthase B of Thermotoga maritima (strain ATCC 43589 / DSM 3109 / JCM 10099 / NBRC 100826 / MSB8).